A 1611-amino-acid chain; its full sequence is MAAAAASALGASAPKALAPADGPIVAGLDKLVNLEGVHDLFEAMRGAYGEDPAWKGLMSCDVVYLKDITTAIGVKDTSVGIFRKFSDGCSWCPTGAECFLSMKDLAYMKAQSAKAQRLTASLATTSNLIARAMRAESELKRARDEERKVDARYKDILEHSLAARKALQKELDETRERELHLLKELGKRSSIRTKAFSFFDWLFMAVVFFLFLHYTSAECVKPDFGCLVVNSNLPVPSLTFHDVMARCYNTFGNIVLSSQIDAARLREECEQSANKFLGTHIGDPAHKVWCENRLETLIPVECDSSEFLEIFTSNLNAFMVSVSQFYKTISYYKLDALVTFAFSAALATNKLKMVMVLPLLLVALYLNVPPITVTIASVIFQPLILPFVGFQLVFPNFLPYNLFVAWVWMVCQAFFSSDGVKLLVSVSTALVQVVFLAVWSISVIVLQQLSIPMVAQILLFVATLTVSVGVKFANSTITVVHPDGNTEKVSRVTLVRQSMAKRISQIKQSLTIRGVIPSGPNRFDSIVVVEGQGGSGVGWRFMNSIFTAGHVVQGSKFVTIKSESTQVKVKVKRVIDLFECVDTLVEIPLTKEFQHIKPLRLAKKVEDSYLQLCAFKPDMVEKASYQGWCTIDSGFIFNSFNTQFGNSGAPYVDSDGRLVGMHLGSQGVISQGVVLVDTLKTQFLAQQSQIDDQLMERIIEGTKVSHAAILTELDRMRTKVEEVALVSARVNQLESQLKDLYEFSSNSIKCLSDDIEKMVCAQLFDEINLQSVMEKISALPPTEKLAKLVEVFVEQKKKGKTKRTARGGKHALGKKYLSKAHFSRMRMLTEEEYNKMVEDGFSPDEIKEVVDQLREQAWQNYLIDNDIGEDDDLDWYDDMLEDERLNEEIDRRVEAALEDRGELAYQKIRRTFVDQALIHLITLKKGNWQTTKVECQPEREEAYKEQFQKAVKQEDLTEGTSYAIYSAGDATILIENKEIDHTEIKPVTTGAKTVQEYPKDARTTVATFDDNKKDIVKTKRTTEIVLEQRKKTCRTCGETRPHNHKMCRDRHTRRFCFWCGVVHSDVEGHSRDLKCPKCSAGFANLREMEQHAVTTCSKKLDSHPEPSRVFQPLDFGLGIFDWRFDLQPIRHHVAVPMNVEVLGYIPVDRLVERRNVITDPLLKLVEPWRQETYGPAVWTIKAYNKMFEKFFYSEPLEFAQLDSSILNLADSYCLQEHDYMSGSQIVPITSTEKNLDSTPGYPKFKVFSTEREYLSTCGWDEYKTVWQVGPREKPLWWCFLKTEVLKLAKIEQDDIRMILCTDPVFTRIGAAFEQHQNSLMKLETENHHAQVGWSPFFGGIHRRATRLYGEHRYYVELDWTRFDGTIPPELFRRIKLMRFFLLDPKYKTPENRDRYNWYVENLIDKVVLLPTGEVCKIYGGNPSGQFSTTVDNNFVNVWLTVFELAYLFYKEHNRLPTICEIKKHTDWICYGDDRLLAVDKRFINSYDTAAVIAMYKDVFGMWVKPDNIKVFPSLEGVSFCGMVWTKRKGQYVGKPNVDKILSTLSDPVSRLPDIQSLWGKLVSLRLLCENESDEVVDYLDKQIESVSRHAKEAGIALPKIGPDFYAEIWID.

Residues 124-187 (TTSNLIARAM…ELHLLKELGK (64 aa)) adopt a coiled-coil conformation. Transmembrane regions (helical) follow at residues 195-215 (AFSF…LHYT), 329-348 (ISYY…ALAT), 353-373 (MVMV…PITV), 375-395 (IASV…LVFP), 397-417 (FLPY…FFSS), 426-446 (VSTA…VIVL), and 450-470 (SIPM…SVGV). Active-site charge relay system; for serine protease activity residues include His-550, Asp-582, and Ser-647. O-(5'-phospho-RNA)-tyrosine is present on Tyr-833. Residues 1352 to 1486 (RYYVELDWTR…AVDKRFINSY (135 aa)) enclose the RdRp catalytic domain.

This sequence belongs to the astroviridae polyprotein 1AB family. In terms of assembly, monomer. Cleaved by the viral and host proteases. The protease is probably autocatalytically cleaved.

The protein localises to the host membrane. It catalyses the reaction RNA(n) + a ribonucleoside 5'-triphosphate = RNA(n+1) + diphosphate. Responsible for the cleavage of the polyprotein into functional products. Its function is as follows. Protein covalently attached to the 5' extremity of the genomic and subgenomic RNAs. It may serve as a primer for the replicase. The chain is Non-structural polyprotein 1AB (ORF1) from Turkey astrovirus 1 (TAstV-1).